The primary structure comprises 394 residues: Mucosal addressin cell adhesion molecule 1 (394 aa).

An N-terminal signal peptide occupies residues 1 to 19; sequence MEPILALLLALGPFQLSRG. Ig-like domains lie at 20–107, 108–225, and 256–345; these read QSFQ…ILVY, AFPD…TSPE, and PSTP…YVTG. At 20-353 the chain is on the extracellular side; it reads QSFQVNPPEP…TGQVIPNPSS (334 aa). Residue N42 is glycosylated (N-linked (GlcNAc...) asparagine). Disulfide bonds link C43–C89, C47–C93, and C130–C198. Positions 219–255 are mucin-like; that stretch reads QSQTSPEPPSTTSAKPYILTSSHTTKAVSTGLSSVAL. A disulfide bridge links C282 with C330. A helical membrane pass occupies residues 354–374; the sequence is MVALWIGSLVLGLLALAFLAY. The Cytoplasmic segment spans residues 375–394; the sequence is CLWKRYRPGPLPDSSSCTLL.

In terms of assembly, homodimer. Detected in Peyer patches and mesenteric lymph nodes but not in spleen.

It localises to the membrane. Cell adhesion leukocyte receptor expressed by mucosal venules, helps to direct lymphocyte traffic into mucosal tissues including the Peyer patches and the intestinal lamina propria. It can bind both the integrin alpha-4/beta-7 and L-selectin, regulating both the passage and retention of leukocytes. This Rattus norvegicus (Rat) protein is Mucosal addressin cell adhesion molecule 1 (Madcam1).